We begin with the raw amino-acid sequence, 530 residues long: Putative ABC transporter ATP-binding protein SSO2030 (530 aa).

2 ABC transporter domains span residues 6 to 243 (IRDL…LGLE) and 282 to 516 (ALYA…EPPL). Residues 38–45 (GRSGSGKS) and 314–321 (GKNGSGKT) contribute to the ATP site.

The protein belongs to the ABC transporter superfamily.

The protein resides in the cell membrane. Its function is as follows. Probably part of an ABC transporter complex. Responsible for energy coupling to the transport system. This Saccharolobus solfataricus (strain ATCC 35092 / DSM 1617 / JCM 11322 / P2) (Sulfolobus solfataricus) protein is Putative ABC transporter ATP-binding protein SSO2030.